The sequence spans 670 residues: PML-RARA-regulated adapter molecule 1 (670 aa).

The interval methionine 1–lysine 561 is disordered. The segment covering aspartate 31 to lysine 43 has biased composition (basic and acidic residues). 4 consecutive repeat copies span residues lysine 70–lysine 81, lysine 82–lysine 93, lysine 94–lysine 105, and lysine 106–lysine 117. Residues lysine 70–arginine 165 form a 4 X 12 AA repeats of K-P-P-[PQ]-P-[EQ]-[VAF]-T-D-L-P-K region. The span at aspartate 114 to lysine 129 shows a compositional bias: basic and acidic residues. A Phosphoserine modification is found at serine 340. Over residues serine 386 to alanine 398 the composition is skewed to low complexity. Over residues proline 454–proline 463 the composition is skewed to pro residues. A compositionally biased stretch (acidic residues) spans glutamate 504 to proline 514. Positions arginine 515–alanine 528 are enriched in basic and acidic residues. Residues lysine 571 to threonine 649 form the SH3 domain.

Interacts with SKAP2, LCP2 and DBNL. May interact with LYN. Interacts with NEK6. May be phosphorylated on tyrosines. In terms of tissue distribution, expressed in peripheral blood leukocytes and bone marrow. Expressed in monocytes, and to a lesser extent in granulocytes and lymphocytes. Not expressed in non hematopoietic tissues except in lung.

Functionally, may be involved in myeloid differentiation. May be involved in integrin signaling in neutrophils. Binds to PtdIns(4)P. This Homo sapiens (Human) protein is PML-RARA-regulated adapter molecule 1 (PRAM1).